A 413-amino-acid polypeptide reads, in one-letter code: Coiled-coil domain-containing protein 83 (413 aa).

Residues Met-1 to Lys-21 form a disordered region. The span at Asn-8–Lys-21 shows a compositional bias: basic and acidic residues. 2 coiled-coil regions span residues Glu-37 to Ile-184 and Trp-216 to Cys-256.

The chain is Coiled-coil domain-containing protein 83 (CCDC83) from Homo sapiens (Human).